Reading from the N-terminus, the 310-residue chain is HPr kinase/phosphorylase (310 aa).

Residues H138 and K159 contribute to the active site. 153-160 (GDSGIGKS) provides a ligand contact to ATP. S160 lines the Mg(2+) pocket. D177 serves as the catalytic Proton acceptor; for phosphorylation activity. Proton donor; for dephosphorylation activity. An important for the catalytic mechanism of both phosphorylation and dephosphorylation region spans residues 201 to 210 (LEIRGVGIID). Residue E202 coordinates Mg(2+). Residue R243 is part of the active site. Residues 264–269 (PVKTGR) form an important for the catalytic mechanism of dephosphorylation region.

It belongs to the HPrK/P family. In terms of assembly, homohexamer. Requires Mg(2+) as cofactor.

The catalysed reaction is [HPr protein]-L-serine + ATP = [HPr protein]-O-phospho-L-serine + ADP + H(+). The enzyme catalyses [HPr protein]-O-phospho-L-serine + phosphate + H(+) = [HPr protein]-L-serine + diphosphate. In terms of biological role, catalyzes the ATP- as well as the pyrophosphate-dependent phosphorylation of a specific serine residue in HPr, a phosphocarrier protein of the phosphoenolpyruvate-dependent sugar phosphotransferase system (PTS). HprK/P also catalyzes the pyrophosphate-producing, inorganic phosphate-dependent dephosphorylation (phosphorolysis) of seryl-phosphorylated HPr (P-Ser-HPr). The two antagonistic activities of HprK/P are regulated by several intracellular metabolites, which change their concentration in response to the absence or presence of rapidly metabolisable carbon sources (glucose, fructose, etc.) in the growth medium. Therefore, by controlling the phosphorylation state of HPr, HPrK/P is a sensor enzyme that plays a major role in the regulation of carbon metabolism and sugar transport: it mediates carbon catabolite repression (CCR), and regulates PTS-catalyzed carbohydrate uptake and inducer exclusion. The sequence is that of HPr kinase/phosphorylase from Streptococcus equi subsp. equi (strain 4047).